A 147-amino-acid chain; its full sequence is MRKLVIPKYYGRPSIGLALFGCTNRPFYHVCVFPDRALGRRYEGNILEQVGTFDPLPNQKNEKLVALNFGRLKYWIGERNAHISVPVLELLGLSGLFPIHPKSFIRAKDNRALIADQQLKVAAEAAEAEKVAQEQASTGAAATSHPQ.

It belongs to the bacterial ribosomal protein bS16 family. Component of the mitochondrial ribosome small subunit (28S) which comprises a 12S rRNA and about 30 distinct proteins.

Its subcellular location is the mitochondrion. The polypeptide is Small ribosomal subunit protein bS16m (mrps-16) (Caenorhabditis elegans).